The following is a 336-amino-acid chain: Abasic site processing protein HMCES (336 aa).

Cysteine 2 acts as the Nucleophile in catalysis. The residue at position 2 (cysteine 2) is a Thiazolidine linkage to a ring-opened DNA abasic site. The disordered stretch occupies residues arginine 26–asparagine 51. A compositionally biased stretch (polar residues) spans tyrosine 40–asparagine 51. Residue glutamate 129 is part of the active site. Positions glutamine 285–lysine 336 are disordered. The span at leucine 322–lysine 336 shows a compositional bias: basic and acidic residues.

This sequence belongs to the SOS response-associated peptidase family. Ubiquitination of the hmces DNA-protein cross-link by rfwd3 may promotes its degradation.

The protein localises to the chromosome. Its activity is regulated as follows. Formation and reversal of DNA-protein cross-link depends on DNA context. Catalyzes formation of the thiazolidine linkage in presence of abasic sites in single-stranded DNA. Mediates the reversal of the thiazolidine cross-link in presence of double stranded DNA. Sensor of abasic sites in single-stranded DNA (ssDNA) required to preserve genome integrity by promoting error-free repair of abasic sites. Acts as an enzyme that recognizes and binds abasic sites in ssDNA at replication forks and chemically modifies the lesion by forming a covalent cross-link with DNA: forms a stable thiazolidine linkage between a ring-opened abasic site and the alpha-amino and sulfhydryl substituents of its N-terminal catalytic cysteine residue. The hmces DNA-protein cross-link is then either reversed or degraded. Hmces is able to catalyze the reversal of its thiazolidine cross-link and cycle between a cross-link and a non-cross-linked state depending on DNA context: mediates self-reversal of the thiazolidine cross-link in double stranded DNA, allowing apex1 to initiate downstream repair of abasic sites. The hmces DNA-protein cross-link can also be degraded by the sprtn metalloprotease following unfolding by the brip1/fancj helicase. Promotes error-free repair of abasic sites by protecting abasic sites from translesion synthesis (TLS) polymerases and endonucleases that are error-prone and would generate mutations and double-strand breaks. Acts as a protease: mediates autocatalytic processing of its N-terminal methionine in order to expose the catalytic cysteine. The HMCES DNA-protein cross-link is then either reversed or degraded. According to a model, the HMCES DNA-protein cross-link. This chain is Abasic site processing protein HMCES, found in Xenopus laevis (African clawed frog).